The following is a 273-amino-acid chain: F-actin-capping protein subunit alpha (273 aa).

Belongs to the F-actin-capping protein alpha subunit family. In terms of assembly, heterodimer of an alpha and a beta subunit.

It localises to the cytoplasm. Its subcellular location is the cytoskeleton. In terms of biological role, F-actin-capping proteins bind in a Ca(2+)-independent manner to the fast growing ends of actin filaments (barbed end) thereby blocking the exchange of subunits at these ends. Unlike other capping proteins (such as gelsolin and severin), these proteins do not sever actin filaments. The protein is F-actin-capping protein subunit alpha (cap1) of Emericella nidulans (strain FGSC A4 / ATCC 38163 / CBS 112.46 / NRRL 194 / M139) (Aspergillus nidulans).